We begin with the raw amino-acid sequence, 335 residues long: Transcriptional coactivator YAP1-B (335 aa).

Residues 1–13 are compositionally biased toward low complexity; that stretch reads MEPGSQQQPSAPG. The interval 1 to 21 is disordered; the sequence is MEPGSQQQPSAPGQQPPPVGH. Phosphoserine; by LATS1 and LATS2 is present on S30. Over residues 114–124 the composition is skewed to polar residues; it reads MNQQRLSQSAP. The tract at residues 114 to 146 is disordered; sequence MNQQRLSQSAPVKSPPALQPQSPPSGVLGSGGN. Over residues 126-136 the composition is skewed to pro residues; that stretch reads KSPPALQPQSP. The interval 137 to 335 is transactivation domain; sequence PSGVLGSGGN…LDKESFLTWL (199 aa). The stretch at 145-173 forms a coiled coil; the sequence is GNQQMRLQQLQMEKERLRLKHQELLRQVR.

This sequence belongs to the YAP1 family. In terms of processing, phosphorylated by lats1 and lats2; leading to cytoplasmic translocation and inactivation.

The protein localises to the cytoplasm. It is found in the nucleus. Its subcellular location is the cell junction. The protein resides in the tight junction. It localises to the cell membrane. In terms of biological role, transcriptional regulator which can act both as a coactivator and a corepressor and is the critical downstream regulatory target in the Hippo signaling pathway that plays a pivotal role in organ size control and tumor suppression by restricting proliferation and promoting apoptosis. Plays a key role in tissue tension and 3D tissue shape by regulating cortical actomyosin network formation. This is Transcriptional coactivator YAP1-B from Xenopus laevis (African clawed frog).